The primary structure comprises 113 residues: MLSPLSPRIIAAFTTAVGAAAIGLAVATAGTAGANTKDEAFIAQMESIGVTFSSPQVATQQAQLVCKKLASGETGTEIAEEVLSQTNLTTKQAAYFVVDATKAYCPQYASQLT.

The signal sequence occupies residues 1–19 (MLSPLSPRIIAAFTTAVGA).

This sequence to M.tuberculosis Rv1291c.

This is an uncharacterized protein from Mycobacterium tuberculosis (strain CDC 1551 / Oshkosh).